A 64-amino-acid polypeptide reads, in one-letter code: Large ribosomal subunit protein bL35 (64 aa).

The span at 1-26 shows a compositional bias: basic residues; it reads MPKMKSHRGASKRFKRTASGKLKRSH. Positions 1 to 42 are disordered; sequence MPKMKSHRGASKRFKRTASGKLKRSHAYTSHLFANKSTKAKR.

This sequence belongs to the bacterial ribosomal protein bL35 family.

The polypeptide is Large ribosomal subunit protein bL35 (Exiguobacterium sp. (strain ATCC BAA-1283 / AT1b)).